The following is a 151-amino-acid chain: Ribosomal RNA large subunit methyltransferase H (151 aa).

Residues leucine 73, glycine 100, and 119-124 (LTKLTL) each bind S-adenosyl-L-methionine.

Belongs to the RNA methyltransferase RlmH family. In terms of assembly, homodimer.

It is found in the cytoplasm. It catalyses the reaction pseudouridine(1915) in 23S rRNA + S-adenosyl-L-methionine = N(3)-methylpseudouridine(1915) in 23S rRNA + S-adenosyl-L-homocysteine + H(+). Functionally, specifically methylates the pseudouridine at position 1915 (m3Psi1915) in 23S rRNA. The chain is Ribosomal RNA large subunit methyltransferase H from Campylobacter hominis (strain ATCC BAA-381 / DSM 21671 / CCUG 45161 / LMG 19568 / NCTC 13146 / CH001A).